The chain runs to 371 residues: Chaperone protein DnaJ (371 aa).

The region spanning 4–68 (DYYQILGVSK…QKRAAYDRFG (65 aa)) is the J domain. The CR-type zinc finger occupies 134–212 (GIEKNISFSS…CHGMGRYHKQ (79 aa)). Cys147, Cys150, Cys164, Cys167, Cys186, Cys189, Cys200, and Cys203 together coordinate Zn(2+). CXXCXGXG motif repeat units lie at residues 147–154 (CDTCHGTG), 164–171 (CDACGGVG), 186–193 (CHKCQGNG), and 200–207 (CKKCHGMG).

This sequence belongs to the DnaJ family. Homodimer. Requires Zn(2+) as cofactor.

The protein resides in the cytoplasm. Functionally, participates actively in the response to hyperosmotic and heat shock by preventing the aggregation of stress-denatured proteins and by disaggregating proteins, also in an autonomous, DnaK-independent fashion. Unfolded proteins bind initially to DnaJ; upon interaction with the DnaJ-bound protein, DnaK hydrolyzes its bound ATP, resulting in the formation of a stable complex. GrpE releases ADP from DnaK; ATP binding to DnaK triggers the release of the substrate protein, thus completing the reaction cycle. Several rounds of ATP-dependent interactions between DnaJ, DnaK and GrpE are required for fully efficient folding. Also involved, together with DnaK and GrpE, in the DNA replication of plasmids through activation of initiation proteins. The chain is Chaperone protein DnaJ from Rickettsia felis (strain ATCC VR-1525 / URRWXCal2) (Rickettsia azadi).